The primary structure comprises 319 residues: 1-aminocyclopropane-1-carboxylate oxidase 1 (319 aa).

Residues 153–253 (PNFGTKVSNY…RMSLASFYNP (101 aa)) enclose the Fe2OG dioxygenase domain. Positions 177, 179, and 234 each coordinate Fe cation.

The protein belongs to the iron/ascorbate-dependent oxidoreductase family. The cofactor is Fe cation.

It catalyses the reaction 1-aminocyclopropane-1-carboxylate + L-ascorbate + O2 = ethene + L-dehydroascorbate + hydrogen cyanide + CO2 + 2 H2O. The protein operates within alkene biosynthesis; ethylene biosynthesis via S-adenosyl-L-methionine; ethylene from S-adenosyl-L-methionine: step 2/2. This Petunia hybrida (Petunia) protein is 1-aminocyclopropane-1-carboxylate oxidase 1 (ACO1).